The following is a 136-amino-acid chain: Large ribosomal subunit protein uL16 (136 aa).

Belongs to the universal ribosomal protein uL16 family. In terms of assembly, part of the 50S ribosomal subunit.

Functionally, binds 23S rRNA and is also seen to make contacts with the A and possibly P site tRNAs. In Rickettsia akari (strain Hartford), this protein is Large ribosomal subunit protein uL16.